We begin with the raw amino-acid sequence, 288 residues long: 4-diphosphocytidyl-2-C-methyl-D-erythritol kinase (288 aa).

K11 is a catalytic residue. An ATP-binding site is contributed by 100-110; the sequence is PIAAGLGSGSS. D140 is an active-site residue.

This sequence belongs to the GHMP kinase family. IspE subfamily.

The catalysed reaction is 4-CDP-2-C-methyl-D-erythritol + ATP = 4-CDP-2-C-methyl-D-erythritol 2-phosphate + ADP + H(+). It participates in isoprenoid biosynthesis; isopentenyl diphosphate biosynthesis via DXP pathway; isopentenyl diphosphate from 1-deoxy-D-xylulose 5-phosphate: step 3/6. In terms of biological role, catalyzes the phosphorylation of the position 2 hydroxy group of 4-diphosphocytidyl-2C-methyl-D-erythritol. The protein is 4-diphosphocytidyl-2-C-methyl-D-erythritol kinase of Wolbachia pipientis wMel.